Consider the following 669-residue polypeptide: Putative heme-binding protein rrnAC3100 (669 aa).

His181 is a heme binding site. 2 disordered regions span residues 260–351 (RVPT…PDVS) and 451–477 (LGGSLGEGVEGSETADDSDAQAAESSQ). In terms of domain architecture, ABM spans 579-667 (GTMGMFYTVK…VLADRPRHVF (89 aa)).

In the N-terminal section; belongs to the ChdC family.

This chain is Putative heme-binding protein rrnAC3100, found in Haloarcula marismortui (strain ATCC 43049 / DSM 3752 / JCM 8966 / VKM B-1809) (Halobacterium marismortui).